The following is a 56-amino-acid chain: UPF0291 protein Clos_1191 (56 aa).

This sequence belongs to the UPF0291 family.

Its subcellular location is the cytoplasm. The protein is UPF0291 protein Clos_1191 of Alkaliphilus oremlandii (strain OhILAs) (Clostridium oremlandii (strain OhILAs)).